The following is a 462-amino-acid chain: Bifunctional protein GlmU (462 aa).

Residues 1-239 form a pyrophosphorylase region; that stretch reads MTESVSKPVR…EASVQGVNAQ (239 aa). UDP-N-acetyl-alpha-D-glucosamine contacts are provided by residues 17–20, lysine 31, glutamine 84, and 89–90; these read LAAG and GT. Aspartate 114 contacts Mg(2+). UDP-N-acetyl-alpha-D-glucosamine contacts are provided by glycine 150, glutamate 165, asparagine 180, and asparagine 237. Position 237 (asparagine 237) interacts with Mg(2+). The interval 240-260 is linker; the sequence is AELAAAEAVWQQNRRKALMVD. Positions 261-462 are N-acetyltransferase; it reads GVTMPAPDTV…QKDKKKDKKA (202 aa). Positions 326 and 344 each coordinate UDP-N-acetyl-alpha-D-glucosamine. Catalysis depends on histidine 356, which acts as the Proton acceptor. Tyrosine 359 and asparagine 370 together coordinate UDP-N-acetyl-alpha-D-glucosamine. Acetyl-CoA contacts are provided by residues alanine 373, 379 to 380, serine 398, serine 416, and arginine 433; that span reads NY.

This sequence in the N-terminal section; belongs to the N-acetylglucosamine-1-phosphate uridyltransferase family. The protein in the C-terminal section; belongs to the transferase hexapeptide repeat family. Homotrimer. It depends on Mg(2+) as a cofactor.

It localises to the cytoplasm. It catalyses the reaction alpha-D-glucosamine 1-phosphate + acetyl-CoA = N-acetyl-alpha-D-glucosamine 1-phosphate + CoA + H(+). The catalysed reaction is N-acetyl-alpha-D-glucosamine 1-phosphate + UTP + H(+) = UDP-N-acetyl-alpha-D-glucosamine + diphosphate. It functions in the pathway nucleotide-sugar biosynthesis; UDP-N-acetyl-alpha-D-glucosamine biosynthesis; N-acetyl-alpha-D-glucosamine 1-phosphate from alpha-D-glucosamine 6-phosphate (route II): step 2/2. Its pathway is nucleotide-sugar biosynthesis; UDP-N-acetyl-alpha-D-glucosamine biosynthesis; UDP-N-acetyl-alpha-D-glucosamine from N-acetyl-alpha-D-glucosamine 1-phosphate: step 1/1. The protein operates within bacterial outer membrane biogenesis; LPS lipid A biosynthesis. Its function is as follows. Catalyzes the last two sequential reactions in the de novo biosynthetic pathway for UDP-N-acetylglucosamine (UDP-GlcNAc). The C-terminal domain catalyzes the transfer of acetyl group from acetyl coenzyme A to glucosamine-1-phosphate (GlcN-1-P) to produce N-acetylglucosamine-1-phosphate (GlcNAc-1-P), which is converted into UDP-GlcNAc by the transfer of uridine 5-monophosphate (from uridine 5-triphosphate), a reaction catalyzed by the N-terminal domain. The protein is Bifunctional protein GlmU of Caulobacter vibrioides (strain ATCC 19089 / CIP 103742 / CB 15) (Caulobacter crescentus).